Reading from the N-terminus, the 150-residue chain is UPF0756 membrane protein PM0771 (150 aa).

4 helical membrane-spanning segments follow: residues 12 to 34 (LVVLILLGVLSNNSSVTISAAIL), 52 to 72 (HGITLGIIILTIGVLSPIVSG), 79 to 99 (LAVFLNWKMWLAVAVGLLVAW), and 123 to 143 (ILGVAFVGGIPVGPLIAAGIL).

This sequence belongs to the UPF0756 family.

The protein resides in the cell membrane. This is UPF0756 membrane protein PM0771 from Pasteurella multocida (strain Pm70).